Consider the following 25-residue polypeptide: Alanine racemase (25 aa).

It belongs to the alanine racemase family. Homodimer. The cofactor is pyridoxal 5'-phosphate.

The catalysed reaction is L-alanine = D-alanine. It functions in the pathway amino-acid biosynthesis; D-alanine biosynthesis; D-alanine from L-alanine: step 1/1. Catalyzes the interconversion of L-alanine and D-alanine. The chain is Alanine racemase from Pseudomonas fluorescens.